We begin with the raw amino-acid sequence, 201 residues long: Recombination protein RecR (201 aa).

The C4-type zinc-finger motif lies at 57–72 (CCDCRTFTEEERCTIC). Residues 81–176 (GQICVVESPA…AASRIAHGVP (96 aa)) form the Toprim domain.

It belongs to the RecR family.

Functionally, may play a role in DNA repair. It seems to be involved in an RecBC-independent recombinational process of DNA repair. It may act with RecF and RecO. This chain is Recombination protein RecR, found in Proteus mirabilis (strain HI4320).